We begin with the raw amino-acid sequence, 33 residues long: Cytochrome b6-f complex subunit 7 (33 aa).

A helical transmembrane segment spans residues 5 to 25 (IFNTAVITFTLVLVGLGAGYL).

This sequence belongs to the PetM family. In terms of assembly, the 4 large subunits of the cytochrome b6-f complex are cytochrome b6, subunit IV (17 kDa polypeptide, PetD), cytochrome f and the Rieske protein, while the 4 small subunits are PetG, PetL, PetM and PetN. The complex functions as a dimer.

It localises to the cellular thylakoid membrane. Functionally, component of the cytochrome b6-f complex, which mediates electron transfer between photosystem II (PSII) and photosystem I (PSI), cyclic electron flow around PSI, and state transitions. The sequence is that of Cytochrome b6-f complex subunit 7 from Thermosynechococcus vestitus (strain NIES-2133 / IAM M-273 / BP-1).